The sequence spans 509 residues: Phosphoenolpyruvate carboxylase (509 aa).

This sequence belongs to the PEPCase type 2 family. Homotetramer. Requires Mg(2+) as cofactor.

The catalysed reaction is oxaloacetate + phosphate = phosphoenolpyruvate + hydrogencarbonate. Catalyzes the irreversible beta-carboxylation of phosphoenolpyruvate (PEP) to form oxaloacetate (OAA), a four-carbon dicarboxylic acid source for the tricarboxylic acid cycle. In Metallosphaera sedula (strain ATCC 51363 / DSM 5348 / JCM 9185 / NBRC 15509 / TH2), this protein is Phosphoenolpyruvate carboxylase.